Reading from the N-terminus, the 172-residue chain is Cytidylate kinase (172 aa).

8 to 16 (GPPGSGKST) is an ATP binding site.

This sequence belongs to the cytidylate kinase family. Type 2 subfamily.

The protein resides in the cytoplasm. The catalysed reaction is CMP + ATP = CDP + ADP. The enzyme catalyses dCMP + ATP = dCDP + ADP. The chain is Cytidylate kinase from Ignicoccus hospitalis (strain KIN4/I / DSM 18386 / JCM 14125).